Consider the following 306-residue polypeptide: Serine/threonine-protein phosphatase PP2A-1 catalytic subunit (306 aa).

Mn(2+) is bound by residues aspartate 54, histidine 56, aspartate 82, and asparagine 114. Residue histidine 115 is the Proton donor of the active site. Residues histidine 164 and histidine 238 each coordinate Mn(2+).

The protein belongs to the PPP phosphatase family. PP-2A subfamily. Mn(2+) serves as cofactor.

It localises to the cytoplasm. The enzyme catalyses O-phospho-L-seryl-[protein] + H2O = L-seryl-[protein] + phosphate. The catalysed reaction is O-phospho-L-threonyl-[protein] + H2O = L-threonyl-[protein] + phosphate. This Oryza sativa subsp. indica (Rice) protein is Serine/threonine-protein phosphatase PP2A-1 catalytic subunit (PP2A1).